Consider the following 291-residue polypeptide: Nucleotide-binding protein MSMEG_3079/MSMEI_3001 (291 aa).

14 to 21 is an ATP binding site; the sequence is GLSGAGRG. 65–68 serves as a coordination point for GTP; that stretch reads DVRS.

This sequence belongs to the RapZ-like family.

In terms of biological role, displays ATPase and GTPase activities. The polypeptide is Nucleotide-binding protein MSMEG_3079/MSMEI_3001 (Mycolicibacterium smegmatis (strain ATCC 700084 / mc(2)155) (Mycobacterium smegmatis)).